Here is a 303-residue protein sequence, read N- to C-terminus: MKCNACWRELEGQAVSTTCGHLLCTEDAKKILSNDAACPICDQVLSKSHMRPVDTNPNDDWTNMSMAGVSPQILMKSAYRSVMFYIGQKELEMQYKMNRIVGQCRQKCELMQAKFTEKLEEVHTAYQKMAKKCQLMEQEVENLSRDKQELQEKFAEKSRQKRKLDEMYDQLRSEYESAKRSAIQPANNYFPRAQPDLFSGVPNIMDSSDPLRQGLAGLPETPGRRDEGWAPPPRQRRSTSGPFELSAGSPAHNAAPPVDIRPRQPARPVFGTAMNNTSAALRNMIISPVKRPQLSRNRPHMFT.

The RING-type; degenerate zinc finger occupies 3 to 42 (CNACWRELEGQAVSTTCGHLLCTEDAKKILSNDAACPICD). The stretch at 119 to 184 (LEEVHTAYQK…YESAKRSAIQ (66 aa)) forms a coiled coil. The interval 201–268 (VPNIMDSSDP…DIRPRQPARP (68 aa)) is disordered.

As to quaternary structure, interacts with ZIP4 and PTD. As to expression, expressed in young panicles.

Its subcellular location is the nucleus. It localises to the chromosome. The catalysed reaction is S-ubiquitinyl-[E2 ubiquitin-conjugating enzyme]-L-cysteine + [acceptor protein]-L-lysine = [E2 ubiquitin-conjugating enzyme]-L-cysteine + N(6)-ubiquitinyl-[acceptor protein]-L-lysine.. Its pathway is protein modification; protein ubiquitination. Ubiquitin E3 ligase required for class I crossover (CO) formation during meiosis. This is E3 ubiquitin-protein ligase CCNB1IP1 homolog from Oryza sativa subsp. japonica (Rice).